We begin with the raw amino-acid sequence, 887 residues long: Pyruvate, phosphate dikinase 2 (887 aa).

Threonine 467 carries the post-translational modification Phosphothreonine; by PDRP1. Histidine 469 acts as the Tele-phosphohistidine intermediate in catalysis. Residues arginine 575, arginine 632, glutamate 761, glycine 782, threonine 783, asparagine 784, and aspartate 785 each contribute to the substrate site. Residue glutamate 761 participates in Mg(2+) binding. Aspartate 785 lines the Mg(2+) pocket. Cysteine 847 functions as the Proton donor in the catalytic mechanism.

It belongs to the PEP-utilizing enzyme family. Mg(2+) serves as cofactor.

Its subcellular location is the cytoplasm. It catalyses the reaction pyruvate + phosphate + ATP = phosphoenolpyruvate + AMP + diphosphate + H(+). Functionally, formation of phosphoenolpyruvate. The polypeptide is Pyruvate, phosphate dikinase 2 (PPDK2) (Oryza sativa subsp. japonica (Rice)).